Reading from the N-terminus, the 723-residue chain is Polyribonucleotide nucleotidyltransferase (723 aa).

Aspartate 488 and aspartate 494 together coordinate Mg(2+). Residues 555-614 (PKIITLNIKPEKIKDVIGPGGKQINAIIEETGVKIDIEQDGTVYIASQDQAMNRKAIAII) enclose the KH domain. An S1 motif domain is found at 624–692 (GEVYTGKVRR…HQGRVNLSRK (69 aa)). Positions 692 to 723 (KALLEKKEQPEGDKKPQAEKKFYPKTKKPESK) are disordered. Residues 693 to 723 (ALLEKKEQPEGDKKPQAEKKFYPKTKKPESK) show a composition bias toward basic and acidic residues.

This sequence belongs to the polyribonucleotide nucleotidyltransferase family. The cofactor is Mg(2+).

It is found in the cytoplasm. The enzyme catalyses RNA(n+1) + phosphate = RNA(n) + a ribonucleoside 5'-diphosphate. In terms of biological role, involved in mRNA degradation. Catalyzes the phosphorolysis of single-stranded polyribonucleotides processively in the 3'- to 5'-direction. The polypeptide is Polyribonucleotide nucleotidyltransferase (Listeria innocua serovar 6a (strain ATCC BAA-680 / CLIP 11262)).